Reading from the N-terminus, the 241-residue chain is Probable xyloglucan-specific endo-beta-1,4-glucanase A (241 aa).

The N-terminal stretch at 1–18 (MKFNLALALSLTVATAEA) is a signal peptide.

The protein belongs to the glycosyl hydrolase 12 (cellulase H) family.

Its subcellular location is the secreted. It catalyses the reaction xyloglucan + H2O = xyloglucan oligosaccharides.. Catalyzes endohydrolysis of 1,4-beta-D-glucosidic linkages in xyloglucan with retention of the beta-configuration of the glycosyl residues. Specific for xyloglucan and does not hydrolyze other cell wall components. The polypeptide is Probable xyloglucan-specific endo-beta-1,4-glucanase A (xgeA) (Aspergillus clavatus (strain ATCC 1007 / CBS 513.65 / DSM 816 / NCTC 3887 / NRRL 1 / QM 1276 / 107)).